We begin with the raw amino-acid sequence, 512 residues long: NAD(P)H-quinone oxidoreductase subunit 2, organellar chromatophore (512 aa).

14 helical membrane-spanning segments follow: residues 6 to 26 (LLAL…LLAL), 43 to 63 (WVPP…ASQW), 80 to 100 (LAIA…MISW), 107 to 127 (GAPM…AMFL), 133 to 153 (LVSI…LAGY), 168 to 188 (LLVG…LYGL), 210 to 230 (AALA…AVPF), 242 to 262 (PTPI…ALAL), 276 to 296 (WKFL…IVAL), 304 to 324 (MLAY…VCGT), 332 to 352 (ILYL…VILF), 376 to 396 (IGLS…GFFG), 411 to 431 (LLVV…ISVI), and 464 to 484 (VALL…NPLF).

This sequence belongs to the complex I subunit 2 family. In terms of assembly, NDH-1 can be composed of about 15 different subunits; different subcomplexes with different compositions have been identified which probably have different functions.

Its subcellular location is the plastid. It localises to the organellar chromatophore thylakoid membrane. The catalysed reaction is a plastoquinone + NADH + (n+1) H(+)(in) = a plastoquinol + NAD(+) + n H(+)(out). It catalyses the reaction a plastoquinone + NADPH + (n+1) H(+)(in) = a plastoquinol + NADP(+) + n H(+)(out). NDH-1 shuttles electrons from an unknown electron donor, via FMN and iron-sulfur (Fe-S) centers, to quinones in the respiratory and/or the photosynthetic chain. The immediate electron acceptor for the enzyme in this species is believed to be plastoquinone. Couples the redox reaction to proton translocation, and thus conserves the redox energy in a proton gradient. Cyanobacterial NDH-1 also plays a role in inorganic carbon-concentration. The sequence is that of NAD(P)H-quinone oxidoreductase subunit 2, organellar chromatophore from Paulinella chromatophora.